The following is a 165-amino-acid chain: 6,7-dimethyl-8-ribityllumazine synthase (165 aa).

5-amino-6-(D-ribitylamino)uracil contacts are provided by residues Tyr30, 61 to 63 (ALE), and 90 to 92 (VVI). Position 95–96 (95–96 (ET)) interacts with (2S)-2-hydroxy-3-oxobutyl phosphate. His98 acts as the Proton donor in catalysis. Asn123 is a binding site for 5-amino-6-(D-ribitylamino)uracil. Arg137 lines the (2S)-2-hydroxy-3-oxobutyl phosphate pocket.

Belongs to the DMRL synthase family.

It catalyses the reaction (2S)-2-hydroxy-3-oxobutyl phosphate + 5-amino-6-(D-ribitylamino)uracil = 6,7-dimethyl-8-(1-D-ribityl)lumazine + phosphate + 2 H2O + H(+). Its pathway is cofactor biosynthesis; riboflavin biosynthesis; riboflavin from 2-hydroxy-3-oxobutyl phosphate and 5-amino-6-(D-ribitylamino)uracil: step 1/2. Its function is as follows. Catalyzes the formation of 6,7-dimethyl-8-ribityllumazine by condensation of 5-amino-6-(D-ribitylamino)uracil with 3,4-dihydroxy-2-butanone 4-phosphate. This is the penultimate step in the biosynthesis of riboflavin. The sequence is that of 6,7-dimethyl-8-ribityllumazine synthase from Xanthobacter autotrophicus (strain ATCC BAA-1158 / Py2).